A 393-amino-acid chain; its full sequence is Serpin-Z4 (393 aa).

Residues 342-366 are RCL; that stretch reads GTEAAAVSVASMTKDMLLMGDFVAD.

This sequence belongs to the serpin family.

Its function is as follows. Probable serine protease inhibitor. The protein is Serpin-Z4 of Arabidopsis thaliana (Mouse-ear cress).